Consider the following 573-residue polypeptide: Adenine deaminase 2 (573 aa).

The protein belongs to the metallo-dependent hydrolases superfamily. Adenine deaminase family. Mn(2+) is required as a cofactor.

It carries out the reaction adenine + H2O + H(+) = hypoxanthine + NH4(+). The protein is Adenine deaminase 2 of Shouchella clausii (strain KSM-K16) (Alkalihalobacillus clausii).